The following is an 89-amino-acid chain: Large ribosomal subunit protein eL34 (89 aa).

This sequence belongs to the eukaryotic ribosomal protein eL34 family.

The polypeptide is Large ribosomal subunit protein eL34 (Methanococcus maripaludis (strain C6 / ATCC BAA-1332)).